Consider the following 600-residue polypeptide: DDB1- and CUL4-associated factor 15 (600 aa).

The tract at residues 1–30 (MAPSSKSERNSGAGSGGGGPGGAGGKRAAG) is disordered. The span at 13-27 (AGSGGGGPGGAGGKR) shows a compositional bias: gly residues. Serine 50 carries the phosphoserine modification. Cysteine 193, cysteine 196, cysteine 211, and histidine 214 together coordinate Zn(2+). E7820 is bound by residues phenylalanine 231 and 234–235 (AF). A compositionally biased stretch (pro residues) spans 280–295 (PASPPEPQSPELPPAL). The disordered stretch occupies residues 280 to 316 (PASPPEPQSPELPPALPSFCPEAAPARSSGSPEPSPA). Phosphoserine is present on residues serine 310 and serine 314.

Component of the DCX(DCAF15) complex, also named CLR4(DCAF15) complex, composed of DCAF15, DDB1, cullin-4 (CUL4A or CUL4B), DDA1 and RBX1.

Its pathway is protein modification; protein ubiquitination. With respect to regulation, aryl sulfonamide anticancer drugs change the substrate specificity of DCAF15 by acting as a molecular glue that promotes binding between DCAF15 and weak affinity interactors, such as RBM39. In terms of biological role, substrate-recognition component of the DCX(DCAF15) complex, a cullin-4-RING E3 ubiquitin-protein ligase complex that mediates ubiquitination and degradation of target proteins. The DCX(DCAF15) complex acts as a regulator of the natural killer (NK) cells effector functions, possibly by mediating ubiquitination and degradation of cohesin subunits SMC1A and SMC3. May play a role in the activation of antigen-presenting cells (APC) and their interaction with NK cells. Binding of aryl sulfonamide anticancer drugs, such as indisulam (E7070) or E7820, change the substrate specificity of the DCX(DCAF15) complex, leading to promote ubiquitination and degradation of splicing factor RBM39. RBM39 degradation results in splicing defects and death in cancer cell lines. Aryl sulfonamide anticancer drugs change the substrate specificity of DCAF15 by acting as a molecular glue that promotes binding between DCAF15 and weak affinity interactor RBM39. Aryl sulfonamide anticancer drugs also promote ubiquitination and degradation of RBM23 and PRPF39. This is DDB1- and CUL4-associated factor 15 from Homo sapiens (Human).